The sequence spans 181 residues: BURP domain-containing protein 7 (181 aa).

The first 21 residues, Met-1 to Ala-21, serve as a signal peptide directing secretion. The BURP domain maps to Phe-65–Pro-181. The disordered stretch occupies residues Gln-112–Pro-181. Residues Arg-128–Ser-143 are compositionally biased toward basic residues. Residues Ser-144–Ala-157 show a composition bias toward low complexity. Basic residues predominate over residues Gly-170–Pro-181.

As to expression, expressed in roots, stems, leaves and shoot.

This chain is BURP domain-containing protein 7 (BURP7), found in Oryza sativa subsp. japonica (Rice).